Consider the following 1120-residue polypeptide: Isoleucine--tRNA ligase (1120 aa).

The 'HIGH' region signature appears at 64–74 (PFANGLPHYGH). A 'KMSKS' region motif is present at residues 647-651 (KLSKR). Lys-650 provides a ligand contact to ATP.

It belongs to the class-I aminoacyl-tRNA synthetase family. IleS type 2 subfamily. Monomer. Zn(2+) is required as a cofactor.

The protein resides in the cytoplasm. It carries out the reaction tRNA(Ile) + L-isoleucine + ATP = L-isoleucyl-tRNA(Ile) + AMP + diphosphate. Catalyzes the attachment of isoleucine to tRNA(Ile). As IleRS can inadvertently accommodate and process structurally similar amino acids such as valine, to avoid such errors it has two additional distinct tRNA(Ile)-dependent editing activities. One activity is designated as 'pretransfer' editing and involves the hydrolysis of activated Val-AMP. The other activity is designated 'posttransfer' editing and involves deacylation of mischarged Val-tRNA(Ile). This Ehrlichia canis (strain Jake) protein is Isoleucine--tRNA ligase.